Consider the following 261-residue polypeptide: Probable 6-phosphogluconolactonase 4 (261 aa).

It belongs to the glucosamine/galactosamine-6-phosphate isomerase family. 6-phosphogluconolactonase subfamily.

It is found in the cytoplasm. Its subcellular location is the cytosol. It catalyses the reaction 6-phospho-D-glucono-1,5-lactone + H2O = 6-phospho-D-gluconate + H(+). It participates in carbohydrate degradation; pentose phosphate pathway; D-ribulose 5-phosphate from D-glucose 6-phosphate (oxidative stage): step 2/3. Its function is as follows. Catalyzes the hydrolysis of 6-phosphogluconolactone to 6-phosphogluconate. The protein is Probable 6-phosphogluconolactonase 4 of Arabidopsis thaliana (Mouse-ear cress).